Consider the following 475-residue polypeptide: ATP synthase subunit beta (475 aa).

153–160 provides a ligand contact to ATP; sequence GGAGVGKT.

Belongs to the ATPase alpha/beta chains family. In terms of assembly, F-type ATPases have 2 components, CF(1) - the catalytic core - and CF(0) - the membrane proton channel. CF(1) has five subunits: alpha(3), beta(3), gamma(1), delta(1), epsilon(1). CF(0) has three main subunits: a(1), b(2) and c(9-12). The alpha and beta chains form an alternating ring which encloses part of the gamma chain. CF(1) is attached to CF(0) by a central stalk formed by the gamma and epsilon chains, while a peripheral stalk is formed by the delta and b chains.

The protein localises to the cell membrane. It carries out the reaction ATP + H2O + 4 H(+)(in) = ADP + phosphate + 5 H(+)(out). In terms of biological role, produces ATP from ADP in the presence of a proton gradient across the membrane. The catalytic sites are hosted primarily by the beta subunits. In Limosilactobacillus reuteri (strain DSM 20016) (Lactobacillus reuteri), this protein is ATP synthase subunit beta.